The sequence spans 387 residues: Protein WHAT'S THIS FACTOR 9, mitochondrial (387 aa).

Residues 1–24 (MLSIRRHAKTVASSCTNLTQKRTY) constitute a mitochondrion transit peptide. The PORR domain occupies 32–358 (KRDPYFDNIE…KKYIQLMKNS (327 aa)).

It is found in the mitochondrion. Its function is as follows. RNA-binding protein involved in group II intron splicing. Binds specific group II introns and promotes their splicing (e.g. rpl2 and ccmFC). The chain is Protein WHAT'S THIS FACTOR 9, mitochondrial from Arabidopsis thaliana (Mouse-ear cress).